A 943-amino-acid chain; its full sequence is uncharacterized protein (943 aa).

Met-1 bears the N-acetylmethionine mark. Disordered stretches follow at residues 37-63 (DETPISRNGNDSNINIQPSSVPQQQQQ), 152-177 (KHQFGKSKKNTKGTGGGGDGDDDDEV), 315-381 (LPMN…QQLQ), 397-472 (QNVP…PLKK), and 515-546 (EREALVEEKEKERAEKNTEANEEEEISHESDD). The span at 41–58 (ISRNGNDSNINIQPSSVP) shows a compositional bias: polar residues. Residues 152–162 (KHQFGKSKKNT) show a composition bias toward basic residues. Positions 318–358 (NNYNNHPGQFQNTPPVMPSGQQPPQQPRTLSLTNGPRYSPQ) are enriched in polar residues. A compositionally biased stretch (low complexity) spans 367–381 (QQISQRQQQQQQQLQ). Residues 397–409 (QNVPQGFNPWSPN) are compositionally biased toward polar residues. Low complexity predominate over residues 417 to 433 (SMKQPISQSSISSKNNS). Positions 434 to 470 (AYSIPNVQNNSLTTFSPSSPTDATAMPNSTKQGSSPL) are enriched in polar residues. A compositionally biased stretch (basic and acidic residues) spans 515 to 533 (EREALVEEKEKERAEKNTE). Residues Ser-553, Ser-586, and Ser-619 each carry the phosphoserine modification. Residues 616-639 (EFPSPGKYNSNSDNGEMNTTNEVD) form a disordered region. A compositionally biased stretch (polar residues) spans 622–639 (KYNSNSDNGEMNTTNEVD). The residue at position 649 (Ser-649) is a Phosphoserine. A disordered region spans residues 654–683 (IPERDPKRNVSDATIKRRESDGNGRRLSNV). Over residues 655–677 (PERDPKRNVSDATIKRRESDGNG) the composition is skewed to basic and acidic residues. 3 positions are modified to phosphoserine: Ser-681, Ser-766, and Ser-771.

This is an uncharacterized protein from Saccharomyces cerevisiae (strain ATCC 204508 / S288c) (Baker's yeast).